A 456-amino-acid polypeptide reads, in one-letter code: Protein shifted (456 aa).

The signal sequence occupies residues 1–30 (MTHQGIGCLVKWLYLVLIVHTLLCIGQLEC). The interval 34 to 112 (HHNRNNNNNN…GGGGSRHNRN (79 aa)) is disordered. Positions 44–55 (RRADSSSSEEGH) are enriched in basic and acidic residues. Asn-57 carries N-linked (GlcNAc...) asparagine glycosylation. Residues 77-87 (HQPRRGQRKKQ) are compositionally biased toward basic residues. A compositionally biased stretch (gly residues) spans 88–107 (QGGGGGGSGGGGGNGGGGGS). Residues 119–261 (LWINEQQLKM…PIRLNFKKEC (143 aa)) enclose the WIF domain. Residues Asn-173, Asn-217, and Asn-227 are each glycosylated (N-linked (GlcNAc...) asparagine). Intrachain disulfides connect Cys-224-Cys-261, Cys-283-Cys-293, Cys-287-Cys-299, Cys-301-Cys-310, Cys-315-Cys-325, Cys-319-Cys-331, Cys-333-Cys-342, Cys-347-Cys-357, Cys-351-Cys-363, Cys-365-Cys-374, Cys-379-Cys-389, Cys-383-Cys-395, Cys-397-Cys-406, Cys-416-Cys-423, Cys-418-Cys-429, and Cys-431-Cys-440. EGF-like domains lie at 279–311 (TLQE…QYCE), 315–342 (CFPQ…GTQC), 343–375 (EGGI…LRCE), 376–407 (YSKC…DHCE), and 412–441 (QRSI…RHCN). A glycan (N-linked (GlcNAc...) asparagine) is linked at Asn-324. The N-linked (GlcNAc...) asparagine glycan is linked to Asn-420.

As to quaternary structure, interacts with hh. In terms of tissue distribution, at the blastoderm stage, it is ubiquitously expressed. As embryogenesis continues, it is expressed in the epidermis and central nervous system, this expression being segmentally modulated. Also highly expressed at the foregut and hindgut throughout embryogenesis. In third instar wing imaginal disks, it is highly expressed in the most anterior and posterior parts of the disk and weakly expressed at the antero/posterior (A/P) compartment border. In the leg disks and the antenna part of the eye-antennal imaginal disk it is also weakly expressed at the A/P compartment border. Weakly expressed in the morphogenetic furrow in the eye primordium.

It is found in the secreted. The protein resides in the extracellular space. The protein localises to the extracellular matrix. Functionally, required for normal accumulation and movement of lipid-modified hedgehog (hh) morphogen. May act by stabilizing the interaction between heparan sulfate proteoglycans (HSPGs) and hh, HSPGs being required for diffusion of hh morphogen. Not involved in wingless (wg) morphogen movement, suggesting that it may provide HSPG specificity for Hh. The polypeptide is Protein shifted (shf) (Drosophila melanogaster (Fruit fly)).